We begin with the raw amino-acid sequence, 281 residues long: Dexamethasone-induced Ras-related protein 1 (281 aa).

Residue Cys-11 is modified to S-nitrosocysteine. 31-38 contacts GTP; that stretch reads GSSKVGKT. The short motif at 53–61 is the Effector region element; the sequence is YTPTIEDFH. GTP-binding positions include 78–82 and 145–148; these read DTSGN and NKGD. Cys-278 is modified (cysteine methyl ester). Residue Cys-278 is the site of S-farnesyl cysteine attachment. The propeptide at 279–281 is removed in mature form; the sequence is VIS.

The protein belongs to the small GTPase superfamily. RasD family. As to quaternary structure, forms a ternary complex with CAPON and NOS1. Component of a complex, at least composed of APBB1, RASD1/DEXRAS1 and APP. Interacts with APBB1/FE65. Post-translationally, S-nitrosylation stimulates guanine-nucleotide exchange activity. Expressed in a variety of tissues including heart, cardiovascular tissues, brain, placenta, lung, liver, skeletal muscle, kidney, pancreas, gastrointestinal and reproductive tissues.

It is found in the cell membrane. The protein resides in the cytoplasm. The protein localises to the perinuclear region. Its subcellular location is the nucleus. In terms of biological role, small GTPase. Negatively regulates the transcription regulation activity of the APBB1/FE65-APP complex via its interaction with APBB1/FE65. This Homo sapiens (Human) protein is Dexamethasone-induced Ras-related protein 1 (RASD1).